The primary structure comprises 279 residues: Fatty acid elongase 2 (279 aa).

A run of 7 helical transmembrane segments spans residues 16–36, 61–81, 112–132, 138–158, 164–184, 196–216, and 242–262; these read LMLE…ALVW, AIIV…IVVV, FWIG…MFLL, PPFL…HTYC, MVLF…YFAM, FAPF…LVTT, and MGVI…LNSY. The HxxHH motif motif lies at 142 to 146; it reads HWYHH. The active-site Nucleophile is His145.

It belongs to the ELO family.

Its subcellular location is the endoplasmic reticulum membrane. The catalysed reaction is an acyl-CoA + malonyl-CoA + H(+) = a 3-oxoacyl-CoA + CO2 + CoA. Its pathway is lipid metabolism; fatty acid biosynthesis. Involved in the synthesis of fatty acids. Elongates C10 fatty acids to C14. Required for the maintenance of the global lipidome profile in this parasite. In Trypanosoma cruzi (strain CL Brener), this protein is Fatty acid elongase 2.